The chain runs to 191 residues: uncharacterized protein (191 aa).

The protein to B.subtilis GlpP.

This is an uncharacterized protein from Escherichia coli (strain K12).